A 198-amino-acid chain; its full sequence is Patulin synthesis protein F (198 aa).

The first 18 residues, M1–A18, serve as a signal peptide directing secretion. N128 and N184 each carry an N-linked (GlcNAc...) asparagine glycan.

Belongs to the patF family.

The protein resides in the cytoplasm. It is found in the cytosol. The enzyme catalyses phyllostine = neopatulin. It functions in the pathway mycotoxin biosynthesis; patulin biosynthesis. Its function is as follows. Part of the gene cluster that mediates the biosynthesis of patulin, an acetate-derived tetraketide mycotoxin produced by several fungal species that shows antimicrobial properties against several bacteria. PatF catalyzes the conversion of phyllostine into neopatulin. The pathway begins with the synthesis of 6-methylsalicylic acid by the polyketide synthase (PKS) patK via condensation of acetate and malonate units. The 6-methylsalicylic acid decarboxylase patG then catalyzes the decarboxylation of 6-methylsalicylic acid to yield m-cresol (also known as 3-methylphenol). These first reactions occur in the cytosol. The intermediate m-cresol is then transported into the endoplasmic reticulum where the cytochrome P450 monooxygenase patH converts it to m-hydroxybenzyl alcohol, which is further converted to gentisyl alcohol by the cytochrome P450 monooxygenase patI. The oxidoreductases patJ and patO further convert gentisyl alcohol to isoepoxydon in the vacuole. PatN catalyzes then the transformation of isoepoxydon into phyllostine. The cluster protein patF is responsible for the conversion from phyllostine to neopatulin whereas the alcohol dehydrogenase patD converts neopatulin to E-ascladiol. The steps between isoepoxydon and E-ascladiol occur in the cytosol, and E-ascladiol is probably secreted to the extracellular space by one of the cluster-specific transporters patC or patM. Finally, the secreted patulin synthase patE catalyzes the conversion of E-ascladiol to patulin. The protein is Patulin synthesis protein F of Aspergillus clavatus (strain ATCC 1007 / CBS 513.65 / DSM 816 / NCTC 3887 / NRRL 1 / QM 1276 / 107).